The primary structure comprises 388 residues: Formate-dependent phosphoribosylglycinamide formyltransferase (388 aa).

N(1)-(5-phospho-beta-D-ribosyl)glycinamide contacts are provided by residues Glu-11–Leu-12 and Glu-71. Residues Arg-103, Lys-144, Ser-149–Gln-154, Glu-184–Ile-187, and Glu-192 contribute to the ATP site. Residues Asp-108–Leu-300 form the ATP-grasp domain. Glu-257 and Glu-270 together coordinate Mg(2+). N(1)-(5-phospho-beta-D-ribosyl)glycinamide is bound by residues Asp-277, Lys-349, and Arg-356 to Arg-357.

It belongs to the PurK/PurT family. Homodimer.

It carries out the reaction N(1)-(5-phospho-beta-D-ribosyl)glycinamide + formate + ATP = N(2)-formyl-N(1)-(5-phospho-beta-D-ribosyl)glycinamide + ADP + phosphate + H(+). It participates in purine metabolism; IMP biosynthesis via de novo pathway; N(2)-formyl-N(1)-(5-phospho-D-ribosyl)glycinamide from N(1)-(5-phospho-D-ribosyl)glycinamide (formate route): step 1/1. In terms of biological role, involved in the de novo purine biosynthesis. Catalyzes the transfer of formate to 5-phospho-ribosyl-glycinamide (GAR), producing 5-phospho-ribosyl-N-formylglycinamide (FGAR). Formate is provided by PurU via hydrolysis of 10-formyl-tetrahydrofolate. This chain is Formate-dependent phosphoribosylglycinamide formyltransferase, found in Bacteroides fragilis (strain ATCC 25285 / DSM 2151 / CCUG 4856 / JCM 11019 / LMG 10263 / NCTC 9343 / Onslow / VPI 2553 / EN-2).